The sequence spans 395 residues: G-protein coupled receptor 182 (395 aa).

Residues 1–53 (MSVIPSPRPVSTLEPDNDFRDIHNWTELLHLFNQTFTDCHIEFNENTKHVVLF) lie on the Extracellular side of the membrane. N-linked (GlcNAc...) asparagine glycosylation is found at Asn24 and Asn33. The chain crosses the membrane as a helical span at residues 54 to 75 (VFYLAIFVVGLVENVLVICVNC). Over 76 to 86 (RRSGRVGMLNL) the chain is Cytoplasmic. The chain crosses the membrane as a helical span at residues 87 to 109 (YILNMAIADLGIILSLPVWMLEV). At 110–123 (MLEYTWLWGSFSCR) the chain is on the extracellular side. Cys122 and Cys198 are oxidised to a cystine. The helical transmembrane segment at 124-145 (FIHYFYLVNMYSSIFFLTCLSI) threads the bilayer. Over 146-166 (DRYVTLTNTSPSWQRHQHRIR) the chain is Cytoplasmic. Residues 167–189 (RAVCAGVWVLSAIIPLPEVVHIQ) traverse the membrane as a helical segment. At 190–213 (LLDGSEPMCLFLAPFETYSAWALA) the chain is on the extracellular side. The helical transmembrane segment at 214–235 (VALSATILGFLLPFLLIAVFNI) threads the bilayer. Over 236-254 (LTACRLRRQRQTESRRHCL) the chain is Cytoplasmic. A helical membrane pass occupies residues 255 to 276 (LMWAYIVVFAICWLPYQVTMLL). The Extracellular segment spans residues 277–295 (LTLHGTHIFLHCHLVNLLY). A helical membrane pass occupies residues 296–316 (FFYEIIDCFSMLHCVANPILY). Residues 317–395 (NFLSPSFRGR…QTPHLHSAIL (79 aa)) lie on the Cytoplasmic side of the membrane. Residue Ser329 is modified to Phosphoserine.

This sequence belongs to the G-protein coupled receptor 1 family. Expressed in liver and lung.

The protein resides in the cell membrane. Its function is as follows. Orphan receptor. This Mus musculus (Mouse) protein is G-protein coupled receptor 182 (Gpr182).